The primary structure comprises 651 residues: Coiled-coil domain-containing protein 81 (651 aa).

The disordered stretch occupies residues 194 to 314; the sequence is LSSRESFGKR…PKTSPAPACQ (121 aa). Serine 206 carries the phosphoserine modification. 2 stretches are compositionally biased toward basic and acidic residues: residues 212–222 and 232–250; these read RIEHKETENKP and GENR…KEEG. Residues 265 to 275 are compositionally biased toward polar residues; the sequence is SISPAKVTSGS. Serine 273, serine 275, serine 294, and serine 416 each carry phosphoserine. Coiled-coil stretches lie at residues 428 to 465 and 539 to 566; these read SQSL…EELA and KRNT…EHLA.

The protein resides in the cytoplasm. It localises to the cytoskeleton. Its subcellular location is the microtubule organizing center. The protein localises to the centrosome. The sequence is that of Coiled-coil domain-containing protein 81 (Ccdc81) from Rattus norvegicus (Rat).